A 261-amino-acid chain; its full sequence is SURF1-like protein (261 aa).

Transmembrane regions (helical) follow at residues 17 to 37 (LYWALLSVPVVTFGLGTWQIF) and 223 to 243 (LSYIITWYSISAITLAMWVFL).

The protein belongs to the SURF1 family.

It localises to the mitochondrion inner membrane. Probably involved in the biogenesis of the COX complex. The sequence is that of SURF1-like protein from Monosiga brevicollis (Choanoflagellate).